The sequence spans 28 residues: Omega-agatoxin-Aa2a (28 aa).

It belongs to the neurotoxin 04 (omega-agtx) family. 03 (type II/III omega-agtx) subfamily. In terms of tissue distribution, expressed by the venom gland.

It localises to the secreted. Omega-agatoxin are antagonist of voltage-gated calcium channels. They block insect neuromuscular transmission presynaptically. Potent blocker of N-type calcium channels (Cav2.2/CACNA1B). In Agelenopsis aperta (North American funnel-web spider), this protein is Omega-agatoxin-Aa2a.